We begin with the raw amino-acid sequence, 338 residues long: tRNA N6-adenosine threonylcarbamoyltransferase (338 aa).

The Fe cation site is built by His110 and His114. Residues 132–136, Asp165, Gly178, and Asn274 contribute to the substrate site; that span reads VLSGG. Asp298 lines the Fe cation pocket.

It belongs to the KAE1 / TsaD family. It depends on Fe(2+) as a cofactor.

Its subcellular location is the cytoplasm. It catalyses the reaction L-threonylcarbamoyladenylate + adenosine(37) in tRNA = N(6)-L-threonylcarbamoyladenosine(37) in tRNA + AMP + H(+). Functionally, required for the formation of a threonylcarbamoyl group on adenosine at position 37 (t(6)A37) in tRNAs that read codons beginning with adenine. Is involved in the transfer of the threonylcarbamoyl moiety of threonylcarbamoyl-AMP (TC-AMP) to the N6 group of A37, together with TsaE and TsaB. TsaD likely plays a direct catalytic role in this reaction. The polypeptide is tRNA N6-adenosine threonylcarbamoyltransferase (Borrelia recurrentis (strain A1)).